The following is a 139-amino-acid chain: uncharacterized protein (139 aa).

This is an uncharacterized protein from Caenorhabditis elegans.